Reading from the N-terminus, the 479-residue chain is NADH dehydrogenase [ubiquinone] flavoprotein 1, mitochondrial (479 aa).

Position 103 to 112 (103 to 112 (GRGGAGFPSG)) interacts with NADH. 216-264 (RGAGAYICGEETALIESIEGKQGKPRLKPPFPAMAGLYGCPTTVTNVET) lines the FMN pocket. Cys-396, Cys-399, Cys-402, and Cys-442 together coordinate [4Fe-4S] cluster.

The protein belongs to the complex I 51 kDa subunit family. In terms of assembly, complex I is composed of about 45 different subunits. This is a component of the flavoprotein-sulfur (FP) fragment of the enzyme. FMN serves as cofactor. [4Fe-4S] cluster is required as a cofactor.

It localises to the mitochondrion inner membrane. It catalyses the reaction a ubiquinone + NADH + 5 H(+)(in) = a ubiquinol + NAD(+) + 4 H(+)(out). Functionally, core subunit of the mitochondrial membrane respiratory chain NADH dehydrogenase (Complex I) that is believed to belong to the minimal assembly required for catalysis. Complex I functions in the transfer of electrons from NADH to the respiratory chain. The immediate electron acceptor for the enzyme is believed to be ubiquinone. This chain is NADH dehydrogenase [ubiquinone] flavoprotein 1, mitochondrial (ndufv1), found in Dictyostelium discoideum (Social amoeba).